Consider the following 535-residue polypeptide: T-complex protein 1 subunit beta (535 aa).

The residue at position 2 (A2) is an N-acetylalanine. Residue S3 is modified to Phosphoserine. Residue K13 is modified to N6-acetyllysine. Residue G44 participates in ADP binding. ATP is bound at residue G44. S60 carries the post-translational modification Phosphoserine. Position 97 (D97) interacts with Mg(2+). ADP is bound by residues G98, T99, T100, and S101. 3 residues coordinate ATP: G98, T99, and T100. K154 carries the N6-acetyllysine modification. ADP contacts are provided by S168 and S169. An N6-acetyllysine modification is found at K181. K248 is covalently cross-linked (Glycyl lysine isopeptide (Lys-Gly) (interchain with G-Cter in SUMO2)). At S260 the chain carries Phosphoserine. Phosphothreonine is present on T261. 3 residues coordinate ADP: G410, E495, and K500. Positions 495 and 500 each coordinate ATP.

It belongs to the TCP-1 chaperonin family. As to quaternary structure, component of the chaperonin-containing T-complex (TRiC), a hexadecamer composed of two identical back-to-back stacked rings enclosing a protein folding chamber. Each ring is made up of eight different subunits: TCP1/CCT1, CCT2, CCT3, CCT4, CCT5, CCT6A/CCT6, CCT7, CCT8. Interacts with PACRG. Interacts with FLCN. Interacts with DLEC1. Interacts with SVEP1.

Its subcellular location is the cytoplasm. It catalyses the reaction ATP + H2O = ADP + phosphate + H(+). Its function is as follows. Component of the chaperonin-containing T-complex (TRiC), a molecular chaperone complex that assists the folding of actin, tubulin and other proteins upon ATP hydrolysis. The TRiC complex mediates the folding of WRAP53/TCAB1, thereby regulating telomere maintenance. As part of the TRiC complex may play a role in the assembly of BBSome, a complex involved in ciliogenesis regulating transports vesicles to the cilia. This is T-complex protein 1 subunit beta (CCT2) from Bos taurus (Bovine).